A 69-amino-acid polypeptide reads, in one-letter code: MAFLKKSLFLVLFLGLVSLSICDEEKRENEDEENQEDDEQSEMRRGLRSKIWLWVLLMIWQESNKFKKM.

The N-terminal stretch at M1–C22 is a signal peptide. The propeptide occupies D23 to R45. The segment at E25–R45 is disordered. The span at E30–Q40 shows a compositional bias: acidic residues.

This sequence belongs to the frog skin active peptide (FSAP) family. As to quaternary structure, monomer and/or weakly self-associated, oligomer, and amyloid-like fibril. Can adopt a monomeric nonamphipathic alpha-helical conformation, possibly with the aid of its cationic N- and C-termini, when bound to anionic membranes. Forms stable and ordered beta-sheet aggregates in aqueous environment or when bound to anionic or zwitterionic phospholipid vesicles. Expressed by the skin glands.

The protein localises to the secreted. It localises to the target cell membrane. In terms of biological role, atypical cationic antimicrobial peptide with potent activity against Gram-negative and Gram-positive bacteria. Acts by inducing permeabilization of bacterial membrane. In vitro, also shows chemoattractant activity, which is mediated through a G protein-coupled receptor (probably FPR2 coupled to the ERK1/2 MAPK kinase pathway). Has slow-kinetic self-association and amyloid-like properties that modulate its activity. The soluble, weakly self-associated forms act on leukocytes to promote chemotaxis but have low antibacterial activity, the oligomers exhibit potent antimicrobial activity, whereas the amyloid-like fibrils have a very weak antibacterial activity. The membrane composition has a great influence on the peptide behavior. The peptide induces membrane leakage and insertion to a lesser extent in model membranes of the anionic lipid phosphatidylglycerol (PG) than in the model membranes of the zwitterionic lipid phosphatidylcholine (PC) vesicles. It forms more fibrils in PC than in PG. Membrane perturbations are more observed in the presence of PG than in the presence of PC. The peptide shows low hemolytic activity. This Phyllomedusa sauvagei (Sauvage's leaf frog) protein is Atypical cationic antimicrobial peptide.